The primary structure comprises 296 residues: MLSWNNSWHSSSTENRTMEREIVASYEPKKNNEIRMFESSDEMATDLAEYISQVSEISIKERGYFAIALSGGPLISFMRKLCEAPYNKTLDWSKWYIFWADERAVAKNHVDSYYKSTKEDFLSKVPILNGHVYSINDNVTVEDAATDYEFVIRQLVKIRTVGVSESNDCPKFDLILLSIGSDGHVASLFPNHPALELKDDWVTYITDSPVPPPERITFTLPVINSASNIAVVATGEDKAKAVYFAISDGTEGPDAPSIPARMVQPTDGKLVWFLDKASASFLEAKTKNDGYEHPKY.

Belongs to the glucosamine/galactosamine-6-phosphate isomerase family. 6-phosphogluconolactonase subfamily.

It catalyses the reaction 6-phospho-D-glucono-1,5-lactone + H2O = 6-phospho-D-gluconate + H(+). Its pathway is carbohydrate degradation; pentose phosphate pathway; D-ribulose 5-phosphate from D-glucose 6-phosphate (oxidative stage): step 2/3. Its function is as follows. Hydrolysis of 6-phosphogluconolactone to 6-phosphogluconate. This chain is Probable 6-phosphogluconolactonase 1, found in Oryza sativa subsp. japonica (Rice).